The sequence spans 259 residues: TCF3 fusion partner homolog (259 aa).

Disordered stretches follow at residues 51 to 72 (GLGD…GRRR) and 141 to 210 (EDDG…APVQ). The residue at position 167 (Ser167) is a Phosphoserine. Thr172 carries the phosphothreonine modification. Phosphoserine is present on residues Ser180 and Ser188. Thr203 carries the post-translational modification Phosphothreonine. A Glycyl lysine isopeptide (Lys-Gly) (interchain with G-Cter in SUMO2) cross-link involves residue Lys222. The interval 240–259 (VSRGPDKLLPYPTLASPPFD) is disordered. Ser255 carries the phosphoserine modification.

As to quaternary structure, interacts with NOL3; translocates NOL3 into the nucleus and negatively regulated TFPT-induced cell death. Component of the chromatin remodeling INO80 complex; specifically part of a complex module associated with the N-terminus of INO80. Ubiquitously expressed. Abundant in the brain.

The protein localises to the nucleus. Appears to promote apoptosis in a p53/TP53-independent manner. In terms of biological role, putative regulatory component of the chromatin remodeling INO80 complex which is involved in transcriptional regulation, DNA replication and probably DNA repair. The polypeptide is TCF3 fusion partner homolog (Tfpt) (Rattus norvegicus (Rat)).